Consider the following 130-residue polypeptide: uncharacterized protein (130 aa).

This is an uncharacterized protein from Schizosaccharomyces pombe (strain 972 / ATCC 24843) (Fission yeast).